Reading from the N-terminus, the 145-residue chain is Large ribosomal subunit protein bL17 (145 aa).

This sequence belongs to the bacterial ribosomal protein bL17 family. Part of the 50S ribosomal subunit. Contacts protein L32.

The polypeptide is Large ribosomal subunit protein bL17 (Francisella tularensis subsp. holarctica (strain FTNF002-00 / FTA)).